The chain runs to 206 residues: Pyridoxal 5'-phosphate synthase subunit PdxT (206 aa).

59-61 (GES) contributes to the L-glutamine binding site. The Nucleophile role is filled by Cys-91. L-glutamine-binding positions include Arg-123 and 151-152 (IR). Residues His-187 and Glu-189 each act as charge relay system in the active site.

The protein belongs to the glutaminase PdxT/SNO family. In terms of assembly, in the presence of PdxS, forms a dodecamer of heterodimers. Only shows activity in the heterodimer.

It carries out the reaction aldehydo-D-ribose 5-phosphate + D-glyceraldehyde 3-phosphate + L-glutamine = pyridoxal 5'-phosphate + L-glutamate + phosphate + 3 H2O + H(+). It catalyses the reaction L-glutamine + H2O = L-glutamate + NH4(+). It participates in cofactor biosynthesis; pyridoxal 5'-phosphate biosynthesis. Its function is as follows. Catalyzes the hydrolysis of glutamine to glutamate and ammonia as part of the biosynthesis of pyridoxal 5'-phosphate. The resulting ammonia molecule is channeled to the active site of PdxS. This chain is Pyridoxal 5'-phosphate synthase subunit PdxT, found in Mycobacterium sp. (strain KMS).